The sequence spans 115 residues: U2-ctenitoxin-Pn1b (115 aa).

The N-terminal stretch at 1–17 is a signal peptide; it reads MKVAVIILSILVLAAAS. Residues 18–61 constitute a propeptide that is removed on maturation; sequence ESIEEYREDFSRPNAMERSANDWIPTAPSAVERSADFAVEELER. Cystine bridges form between C64-C78, C71-C84, C75-C113, C77-C98, and C86-C96. K115 is a propeptide.

Belongs to the neurotoxin 03 (Tx2) family. 04 subfamily. Expressed by the venom gland.

The protein localises to the secreted. Functionally, blocks voltage-gated sodium channels (Nav). The polypeptide is U2-ctenitoxin-Pn1b (Phoneutria nigriventer (Brazilian armed spider)).